A 327-amino-acid chain; its full sequence is MQQLEEVVASALAKIAEATDNNALEALRVEYFGKKGVFTEQMKALAGLSPEERPAAGQLINQAKEKAQNALNERREALTTAELAKKLAAETIDVSLPGRRFENGGIHPVTRTIERIERIFGELGFSAEYGPEIEDDFHNFDALNIPGHHPARTDHDTFYFNPTLMLRTHTSGVQIRTMEKQQPPIRIIAPGRVYRNDYDQTHTPMFHQVEGLLVDENISFSNLKGILHDFLLNFFEEDLQIRFRPSYFPFTEPSAEVDVMGKNGRWLEVLGCGMVHPNVLRSVGIDPEKYSGFAFGMGVERLTMLRYGVNDLRAFFENDLRFLKQFK.

Mg(2+) is bound at residue glutamate 252.

The protein belongs to the class-II aminoacyl-tRNA synthetase family. Phe-tRNA synthetase alpha subunit type 1 subfamily. As to quaternary structure, tetramer of two alpha and two beta subunits. Mg(2+) serves as cofactor.

It localises to the cytoplasm. The catalysed reaction is tRNA(Phe) + L-phenylalanine + ATP = L-phenylalanyl-tRNA(Phe) + AMP + diphosphate + H(+). The sequence is that of Phenylalanine--tRNA ligase alpha subunit from Tolumonas auensis (strain DSM 9187 / NBRC 110442 / TA 4).